Reading from the N-terminus, the 181-residue chain is Adenylate kinase (181 aa).

10-15 (GAGKGT) contributes to the ATP binding site. Positions 30-59 (STGDLFRSNISEGTELGLQAKQYLDAGDLV) are NMP. AMP-binding positions include T31, R36, 57–59 (DLV), 85–88 (GFPR), and Q92. Residues 126 to 132 (GRGRADD) are LID. Position 127 (R127) interacts with ATP. Positions 129 and 140 each coordinate AMP. An ATP-binding site is contributed by G166.

The protein belongs to the adenylate kinase family. In terms of assembly, monomer.

The protein resides in the cytoplasm. It carries out the reaction AMP + ATP = 2 ADP. It participates in purine metabolism; AMP biosynthesis via salvage pathway; AMP from ADP: step 1/1. Its function is as follows. Catalyzes the reversible transfer of the terminal phosphate group between ATP and AMP. Plays an important role in cellular energy homeostasis and in adenine nucleotide metabolism. This chain is Adenylate kinase, found in Mycobacteroides abscessus (strain ATCC 19977 / DSM 44196 / CCUG 20993 / CIP 104536 / JCM 13569 / NCTC 13031 / TMC 1543 / L948) (Mycobacterium abscessus).